The primary structure comprises 18562 residues: Titin homolog (18562 aa).

In terms of domain architecture, Ig-like 1 spans proline 90–threonine 176. The interval arginine 384 to glutamate 404 is disordered. Ig-like domains follow at residues proline 406–threonine 493, proline 821–asparagine 913, proline 943–serine 1038, and proline 1135–aspartate 1225. A disulfide bridge connects residues cysteine 842 and cysteine 897. The segment at leucine 1336–asparagine 1360 is disordered. Residues proline 1679–serine 1762 enclose the Ig-like 6 domain. Cysteine 1700 and cysteine 1751 form a disulfide bridge. Coiled-coil stretches lie at residues leucine 1766–lysine 1786, glutamine 2011–serine 2038, and isoleucine 2065–glutamate 2085. Positions arginine 2155–alanine 2177 are disordered. The span at arginine 2163–proline 2172 shows a compositional bias: basic residues. Residues leucine 2205 to leucine 2231 are a coiled coil. Disordered regions lie at residues isoleucine 2298 to alanine 2459 and lysine 2614 to alanine 2637. A compositionally biased stretch (low complexity) spans arginine 2309–asparagine 2323. Residues leucine 2324 to glutamate 2341 are compositionally biased toward polar residues. Residues leucine 2606–glutamate 2630 adopt a coiled-coil conformation. The span at glutamate 2621–threonine 2636 shows a compositional bias: acidic residues. 2 consecutive Ig-like domains span residues lysine 3095–tyrosine 3177 and threonine 3179–serine 3264. The tract at residues glutamate 3362–serine 3692 is disordered. The span at serine 3655–asparagine 3665 shows a compositional bias: acidic residues. Ig-like domains lie at proline 3789–valine 3878, proline 3897–aspartate 3985, and proline 4038–threonine 4125. Intrachain disulfides connect cysteine 3919–cysteine 3969 and cysteine 4059–cysteine 4109. Disordered stretches follow at residues glutamine 4553 to threonine 4599, threonine 4634 to glutamate 4699, glycine 4750 to valine 4814, proline 4826 to proline 4855, serine 4912 to lysine 4931, proline 4950 to serine 4969, proline 4989 to glutamate 5216, glycine 5267 to proline 5294, proline 5306 to serine 5325, proline 5345 to proline 5372, glycine 5428 to threonine 6101, valine 6127 to proline 6157, serine 6214 to glutamate 6900, and alanine 6930 to leucine 8453. The segment covering arginine 4555–serine 4577 has biased composition (basic and acidic residues). PVET repeat units lie at residues threonine 4599–proline 4626, valine 4627–proline 4665, valine 4666–threonine 4704, proline 4755–proline 4787, valine 4788–proline 4826, valine 4827–threonine 4865, alanine 4917–proline 4948, valine 4949–proline 4987, valine 4988–proline 5026, valine 5027–proline 5065, valine 5066–proline 5104, valine 5105–proline 5143, valine 5144–proline 5182, valine 5183–threonine 5221, alanine 5273–proline 5304, valine 5305–proline 5343, valine 5344–threonine 5382, alanine 5434–proline 5465, valine 5466–proline 5504, valine 5505–proline 5543, valine 5544–proline 5582, valine 5583–proline 5621, valine 5622–serine 5660, valine 5661–serine 5699, valine 5700–proline 5738, valine 5739–glutamine 5777, valine 5778–proline 5816, valine 5817–proline 5855, valine 5856–serine 5894, valine 5895–proline 5933, valine 5934–glutamine 5972, valine 5973–proline 6011, valine 6012–glutamine 6050, valine 6051–serine 6089, valine 6090–glutamine 6128, valine 6129–threonine 6167, alanine 6219–proline 6250, valine 6251–proline 6289, valine 6290–proline 6328, valine 6329–proline 6367, valine 6368–proline 6406, valine 6407–serine 6445, valine 6446–serine 6484, valine 6485–proline 6523, valine 6524–glutamine 6562, valine 6563–proline 6601, valine 6602–proline 6640, valine 6641–glutamine 6679, valine 6680–proline 6718, valine 6719–alanine 6757, valine 6758–proline 6796, valine 6797–proline 6835, valine 6836–proline 6874, valine 6875–proline 6913, valine 6914–proline 6952, and valine 6953–lysine 6991. 2 stretches are compositionally biased toward basic and acidic residues: residues threonine 4638–serine 4651 and threonine 4677–glutamate 4691. The span at threonine 4960–serine 4969 shows a compositional bias: basic and acidic residues. Residues threonine 5038 to serine 5051 show a composition bias toward basic and acidic residues. 2 stretches are compositionally biased toward basic and acidic residues: residues threonine 5116 to serine 5129 and threonine 5155 to serine 5168. The stretch at alanine 5212–valine 5235 forms a coiled coil. Basic and acidic residues predominate over residues threonine 5316–serine 5325. Basic and acidic residues-rich tracts occupy residues threonine 5477–serine 5490 and threonine 5516–serine 5529. 6 stretches are compositionally biased toward basic and acidic residues: residues proline 6690–serine 6704, proline 6729–serine 6743, proline 6768–serine 6782, proline 6807–serine 6821, proline 6846–serine 6860, and proline 6885–serine 6899. Basic and acidic residues-rich tracts occupy residues glutamate 6972 to lysine 7606, leucine 7613 to lysine 7630, leucine 7637 to lysine 8062, and leucine 8069 to leucine 8453. A coiled-coil region spans residues glutamine 6984 to lysine 7812. BLUE repeat units follow at residues glutamate 6992–lysine 6996, histidine 6997–lysine 7012, leucine 7013–lysine 7028, leucine 7029–lysine 7044, leucine 7045–lysine 7060, leucine 7061–lysine 7076, leucine 7077–lysine 7092, leucine 7093–lysine 7108, leucine 7109–lysine 7124, leucine 7125–lysine 7140, leucine 7141–lysine 7156, leucine 7157–lysine 7172, leucine 7173–lysine 7188, leucine 7189–lysine 7204, leucine 7205–lysine 7220, leucine 7221–lysine 7236, leucine 7237–lysine 7252, leucine 7253–lysine 7268, leucine 7269–lysine 7284, leucine 7285–lysine 7300, leucine 7301–lysine 7316, leucine 7317–arginine 7332, leucine 7333–lysine 7348, leucine 7349–lysine 7364, leucine 7365–lysine 7380, leucine 7381–lysine 7396, leucine 7397–lysine 7412, leucine 7413–lysine 7428, leucine 7429–lysine 7444, leucine 7445–lysine 7460, leucine 7461–lysine 7476, leucine 7477–lysine 7492, leucine 7493–lysine 7508, leucine 7509–lysine 7524, leucine 7525–lysine 7540, leucine 7541–lysine 7556, leucine 7557–lysine 7572, leucine 7573–lysine 7588, leucine 7589–asparagine 7604, phenylalanine 7605–lysine 7620, leucine 7621–asparagine 7628, phenylalanine 7629–lysine 7644, leucine 7645–lysine 7652, leucine 7653–lysine 7668, leucine 7669–lysine 7684, leucine 7685–lysine 7700, leucine 7701–lysine 7716, leucine 7717–lysine 7732, leucine 7733–lysine 7748, leucine 7749–lysine 7764, leucine 7765–lysine 7772, leucine 7773–lysine 7788, leucine 7789–lysine 7804, leucine 7805–lysine 7820, leucine 7821–lysine 7836, leucine 7837–lysine 7852, leucine 7853–lysine 7868, leucine 7869–lysine 7884, leucine 7885–lysine 7900, leucine 7901–lysine 7916, leucine 7917–lysine 7932, leucine 7933–lysine 7948, leucine 7949–lysine 7964, leucine 7965–lysine 7980, leucine 7981–lysine 7996, leucine 7997–lysine 8012, leucine 8013–lysine 8028, leucine 8029–lysine 8044, leucine 8045–asparagine 8060, phenylalanine 8061–lysine 8076, leucine 8077–lysine 8084, leucine 8085–lysine 8100, leucine 8101–lysine 8116, leucine 8117–lysine 8132, leucine 8133–lysine 8148, leucine 8149–lysine 8164, leucine 8165–lysine 8180, leucine 8181–lysine 8196, leucine 8197–lysine 8212, leucine 8213–lysine 8228, leucine 8229–lysine 8244, leucine 8245–lysine 8260, leucine 8261–lysine 8276, leucine 8277–lysine 8292, leucine 8293–lysine 8308, leucine 8309–lysine 8324, leucine 8325–lysine 8340, leucine 8341–lysine 8356, leucine 8357–aspartate 8371, leucine 8373–lysine 8388, leucine 8389–lysine 8404, leucine 8405–lysine 8420, leucine 8421–lysine 8436, leucine 8437–lysine 8452, leucine 8453–lysine 8468, and leucine 8469–lysine 8484. The stretch at lysine 7876–lysine 8273 forms a coiled coil. A coiled-coil region spans residues lysine 8316–glutamine 8490. Positions lysine 8599 to glutamate 8611 are enriched in basic residues. A disordered region spans residues lysine 8599–serine 8626. Basic and acidic residues predominate over residues lysine 8612–serine 8626. A Fibronectin type-III 1 domain is found at lysine 8950–tyrosine 9041. 20 disordered regions span residues isoleucine 9079–glutamate 9104, valine 9147–glutamate 9436, glutamate 9481–serine 9609, alanine 9702–isoleucine 10224, glutamate 10239–proline 10274, glutamine 10539–threonine 11018, glutamate 11030–glutamine 11111, lysine 11123–threonine 11213, alanine 11225–serine 11387, lysine 11420–leucine 11592, leucine 11624–leucine 11825, leucine 11872–serine 11955, threonine 11996–asparagine 12054, glycine 12397–arginine 12418, glutamate 12537–serine 12974, glutamate 13026–valine 13045, alanine 13065–lysine 13261, glutamine 13283–lysine 13514, glutamate 13553–leucine 13574, and glutamate 13594–glycine 13874. The span at lysine 9084–lysine 9093 shows a compositional bias: basic residues. Composition is skewed to basic and acidic residues over residues valine 9172–leucine 9184 and threonine 9191–lysine 9202. Over residues serine 9213–glutamine 9231 the composition is skewed to polar residues. The span at serine 9232–proline 9267 shows a compositional bias: basic and acidic residues. Over residues serine 9273–alanine 9283 the composition is skewed to low complexity. Over residues glutamate 9295 to proline 9332 the composition is skewed to basic and acidic residues. Residues serine 9346 to serine 9359 are compositionally biased toward low complexity. Positions alanine 9371 to glutamine 9510 form a coiled coil. Basic and acidic residues-rich tracts occupy residues valine 9373 to glutamate 9436 and glutamate 9481 to lysine 9521. The segment covering serine 9547 to threonine 9558 has biased composition (low complexity). A coiled-coil region spans residues threonine 9577 to aspartate 9749. Composition is skewed to basic and acidic residues over residues serine 9578–serine 9609 and alanine 9702–proline 9783. Residues serine 9798 to valine 9809 are compositionally biased toward polar residues. Basic and acidic residues-rich tracts occupy residues glutamate 9819–proline 10004, glutamate 10040–asparagine 10149, and valine 10162–glutamate 10196. 2 coiled-coil regions span residues lysine 9822 to alanine 9995 and glutamate 10046 to lysine 10129. Residues lysine 10197–aspartate 10206 show a composition bias toward basic residues. A compositionally biased stretch (basic and acidic residues) spans threonine 10207–isoleucine 10224. A compositionally biased stretch (polar residues) spans glutamate 10239–lysine 10250. In terms of domain architecture, Fibronectin type-III 2 spans lysine 10461–glutamate 10553. The segment covering glutamate 10566–phenylalanine 10609 has biased composition (basic and acidic residues). Over residues serine 10612–histidine 10637 the composition is skewed to polar residues. A compositionally biased stretch (acidic residues) spans isoleucine 10663–proline 10680. The segment covering methionine 10707 to glutamate 10716 has biased composition (basic and acidic residues). The span at alanine 10779–asparagine 10790 shows a compositional bias: polar residues. Composition is skewed to basic and acidic residues over residues glutamine 10840 to methionine 10852 and lysine 10863 to aspartate 10884. Over residues leucine 10961 to glycine 10975 the composition is skewed to polar residues. Composition is skewed to basic and acidic residues over residues isoleucine 10999–glutamate 11009, serine 11045–aspartate 11055, and serine 11076–asparagine 11089. Residues threonine 11018–glutamine 11064 adopt a coiled-coil conformation. Polar residues predominate over residues threonine 11090 to glutamine 11108. Residues lysine 11159–histidine 11173 show a composition bias toward basic and acidic residues. Positions leucine 11174–threonine 11187 are enriched in low complexity. 3 stretches are compositionally biased toward basic and acidic residues: residues lysine 11195–aspartate 11211, isoleucine 11271–lysine 11280, and glutamate 11295–leucine 11318. The span at serine 11374 to serine 11387 shows a compositional bias: polar residues. Composition is skewed to basic and acidic residues over residues lysine 11440–lysine 11464 and glycine 11472–threonine 11485. Polar residues predominate over residues methionine 11503 to alanine 11515. Basic and acidic residues-rich tracts occupy residues leucine 11624–lysine 11635, alanine 11645–glutamate 11669, and valine 11722–valine 11735. A compositionally biased stretch (polar residues) spans glutamate 11754 to valine 11767. A compositionally biased stretch (basic and acidic residues) spans alanine 11916–glutamine 11937. Residues glutamate 12408 to asparagine 12428 adopt a coiled-coil conformation. The Ig-like 12 domain maps to proline 12432–aspartate 12547. Composition is skewed to basic and acidic residues over residues glutamate 12537–aspartate 12547, leucine 12555–lysine 12567, and valine 12609–alanine 12689. Residues serine 12690 to proline 12701 are compositionally biased toward low complexity. Over residues threonine 12729–isoleucine 12740 the composition is skewed to polar residues. Composition is skewed to basic and acidic residues over residues glutamate 12766–serine 12839, glutamate 12852–lysine 12865, and proline 12889–serine 12940. The stretch at lysine 12797–isoleucine 12828 forms a coiled coil. Residues alanine 12980–lysine 13103 are a coiled coil. Composition is skewed to basic and acidic residues over residues alanine 13065–glutamate 13124, proline 13133–glycine 13145, threonine 13176–threonine 13191, glutamate 13203–lysine 13261, glutamine 13283–alanine 13327, alanine 13337–lysine 13354, and leucine 13361–proline 13416. A coiled-coil region spans residues leucine 13237–lysine 13380. Residues serine 13431 to valine 13442 are compositionally biased toward polar residues. Positions glutamate 13452 to lysine 13514 are enriched in basic and acidic residues. The stretch at lysine 13455–alanine 13628 forms a coiled coil. Residues glutamate 13594–proline 13637 are compositionally biased toward basic and acidic residues. Over residues serine 13651 to serine 13662 the composition is skewed to low complexity. The span at lysine 13684–threonine 13696 shows a compositional bias: polar residues. The segment covering isoleucine 13697–proline 13735 has biased composition (basic and acidic residues). The span at serine 13747 to serine 13760 shows a compositional bias: low complexity. A compositionally biased stretch (basic and acidic residues) spans lysine 13761–proline 13770. Over residues serine 13784 to aspartate 13793 the composition is skewed to polar residues. 2 stretches are compositionally biased toward basic and acidic residues: residues isoleucine 13795–glutamate 13808 and serine 13824–threonine 13843. One can recognise an Ig-like 13 domain in the interval proline 13963–tyrosine 14036. Fibronectin type-III domains are found at residues alanine 14153 to proline 14247, valine 14253 to glycine 14348, and valine 14350 to aspartate 14448. Ig-like domains follow at residues proline 14451–serine 14542, serine 14550–asparagine 14634, and proline 14638–glutamate 14727. A disulfide bond links cysteine 14568 and cysteine 14618. Fibronectin type-III domains follow at residues alanine 14826–serine 14920 and isoleucine 14937–glycine 15027. The segment at valine 15011–lysine 15180 is disordered. Basic and acidic residues-rich tracts occupy residues lysine 15034 to valine 15060 and lysine 15085 to arginine 15117. Polar residues predominate over residues glycine 15118 to threonine 15132. Residues serine 15133–glutamate 15177 show a composition bias toward basic and acidic residues. 2 Ig-like domains span residues lysine 15180–alanine 15274 and proline 15283–arginine 15371. Fibronectin type-III domains follow at residues proline 15383 to lysine 15475 and glutamine 15503 to serine 15596. The segment at threonine 15470 to glutamine 15503 is disordered. The segment covering lysine 15473–glutamine 15503 has biased composition (basic and acidic residues). Ig-like domains are found at residues proline 15599–threonine 15687 and proline 15692–threonine 15786. The Fibronectin type-III 10 domain maps to alanine 15791 to asparagine 15883. The Protein kinase domain occupies tyrosine 15934–isoleucine 16189. ATP contacts are provided by residues leucine 15940–valine 15948 and lysine 15963. The active-site Proton acceptor is the aspartate 16055. Positions lysine 16206 to threonine 16264 are autoinhibitory domain. Ig-like domains are found at residues proline 16268 to serine 16358, glycine 16500 to asparagine 16575, proline 16605 to valine 16692, and proline 16705 to threonine 16789. Cystine bridges form between cysteine 16290–cysteine 16342, cysteine 16508–cysteine 16571, cysteine 16627–cysteine 16677, and cysteine 16726–cysteine 16778. The segment at leucine 16805–glutamine 16827 is disordered. 3 Ig-like domains span residues proline 16829–valine 16918, proline 16932–serine 17025, and proline 17037–serine 17126. The segment at glutamine 17121–valine 17169 is disordered. Residues lysine 17129–lysine 17150 are compositionally biased toward basic and acidic residues. Residues arginine 17154–valine 17245 form the Fibronectin type-III 11 domain. Ig-like domains follow at residues proline 17249–threonine 17336, proline 17358–alanine 17447, proline 17457–alanine 17548, proline 17570–isoleucine 17661, proline 17676–threonine 17765, proline 17782–serine 17873, proline 18008–aspartate 18097, proline 18121–serine 18213, proline 18224–aspartate 18316, proline 18329–threonine 18417, and proline 18429–serine 18519. Disulfide bonds link cysteine 17379/cysteine 17431 and cysteine 17478/cysteine 17530. Cysteine 17697 and cysteine 17754 are joined by a disulfide. Cysteine 18143 and cysteine 18195 are joined by a disulfide.

It belongs to the protein kinase superfamily. CAMK Ser/Thr protein kinase family. As to quaternary structure, interacts (via C-terminus) with myosin. Interacts with actin. Mg(2+) is required as a cofactor. As to expression, expression is restricted to body wall, enteric and vulval muscles.

It localises to the cytoplasm. It is found in the myofibril. The protein localises to the sarcomere. Its subcellular location is the a band. The protein resides in the i band. It localises to the nucleus membrane. It catalyses the reaction L-seryl-[protein] + ATP = O-phospho-L-seryl-[protein] + ADP + H(+). It carries out the reaction L-threonyl-[protein] + ATP = O-phospho-L-threonyl-[protein] + ADP + H(+). Serine/threonine-protein kinase. Key component in the assembly and functioning of muscles. By providing connections at the level of individual microfilaments, it contributes to the fine balance of forces between the two halves of the sarcomere. The size and extensibility of the cross-links are the main determinants of sarcomere extensibility properties of muscle. In non-muscle cells, seems to play a role in chromosome condensation and chromosome segregation during mitosis. Might link the lamina network to chromatin or nuclear actin, or both during interphase. This chain is Titin homolog, found in Caenorhabditis elegans.